We begin with the raw amino-acid sequence, 207 residues long: MTARGNLFIVSAPSGAGKSSLISALLQDKPADKQVSVSHTTRQPRPGEVNGQHYHFVTKEEFKALITENAFFEWAEVFGNYYGTSRKVIEQTLTDGIDVFLDIDWQGAQQVKKVMPEAIGIFILPPSRTELEKRLTGRGQDSKEVIASRMAQAASEISHYNEYDFIIINDDFDTALADLVAIIRSQRLTDTGQIHAHNDMIQGLLAD.

One can recognise a Guanylate kinase-like domain in the interval 5-184; that stretch reads GNLFIVSAPS…ALADLVAIIR (180 aa). 12–19 contacts ATP; that stretch reads APSGAGKS.

It belongs to the guanylate kinase family.

The protein localises to the cytoplasm. It carries out the reaction GMP + ATP = GDP + ADP. Its function is as follows. Essential for recycling GMP and indirectly, cGMP. The sequence is that of Guanylate kinase from Shewanella violacea (strain JCM 10179 / CIP 106290 / LMG 19151 / DSS12).